A 226-amino-acid polypeptide reads, in one-letter code: Large ribosomal subunit protein uL3 (226 aa).

Polar residues predominate over residues 135-150 (MSSQRASHGNSRSHNV). Positions 135–158 (MSSQRASHGNSRSHNVPGSIGMAQ) are disordered. Glutamine 158 bears the N5-methylglutamine mark.

This sequence belongs to the universal ribosomal protein uL3 family. Part of the 50S ribosomal subunit. Forms a cluster with proteins L14 and L19. In terms of processing, methylated by PrmB.

One of the primary rRNA binding proteins, it binds directly near the 3'-end of the 23S rRNA, where it nucleates assembly of the 50S subunit. In Variovorax paradoxus (strain S110), this protein is Large ribosomal subunit protein uL3.